A 457-amino-acid chain; its full sequence is Beta-1,4-mannosyltransferase egh (457 aa).

6 consecutive transmembrane segments (helical) span residues 8-28 (LLHC…SGGI), 35-55 (FTLV…LYLL), 57-77 (FLTL…VFYN), 346-366 (LLGI…NIIF), 378-398 (VDFV…FGVI), and 415-435 (VLGA…AVIW).

Belongs to the glycosyltransferase 2 family.

The protein localises to the membrane. In terms of biological role, glycosyltransferase with a proposed role in glycosphingolipid biosynthesis. Neurogenic protein implicated in epithelial development. Critical component of a differential oocyte-follicle cell adhesive system. This chain is Beta-1,4-mannosyltransferase egh (egh), found in Drosophila melanogaster (Fruit fly).